Reading from the N-terminus, the 579-residue chain is uncharacterized protein (579 aa).

Transmembrane regions (helical) follow at residues 13-35 (DLIK…IPWI), 39-61 (SISR…LLLN), 66-83 (ANGL…AFYF), 93-110 (AYWG…TYPL), 130-152 (LAIV…IEYL), 162-181 (IVPK…FFLI), 201-223 (LIVN…LYLA), 238-257 (YIIM…RLLL), 264-286 (GFYR…GIHT), 296-315 (IRVM…LFSM), and 324-346 (LFSL…YYLA).

The protein resides in the cell membrane. This is an uncharacterized protein from Pasteurella multocida (strain Pm70).